Reading from the N-terminus, the 208-residue chain is Large ribosomal subunit protein uL4 (208 aa).

A disordered region spans residues 44–85; that stretch reads RQGTKKTKTRAEVRGGGKKPWRQKGTGRARQGSIRAPHWRGG. Positions 59–70 are enriched in basic residues; sequence GGKKPWRQKGTG.

It belongs to the universal ribosomal protein uL4 family. As to quaternary structure, part of the 50S ribosomal subunit.

In terms of biological role, one of the primary rRNA binding proteins, this protein initially binds near the 5'-end of the 23S rRNA. It is important during the early stages of 50S assembly. It makes multiple contacts with different domains of the 23S rRNA in the assembled 50S subunit and ribosome. Its function is as follows. Forms part of the polypeptide exit tunnel. The polypeptide is Large ribosomal subunit protein uL4 (Mesoplasma florum (strain ATCC 33453 / NBRC 100688 / NCTC 11704 / L1) (Acholeplasma florum)).